The primary structure comprises 822 residues: MDPECSRLLPALCAVLADPRQLVADDTCLEKLLDWFKTVTEAESSLQLLQDHPCLMELLSHVLKPQDVSPRVLSFALRLVGVFAAQEDCFEYLQQGELLLGLFGESGAPGWAAWSIPSVRSGWIQGLCYLAHHPSALHFLADSGAVDTLFSLQGDPSLFVASAASQLLVHILALSMQGGAPGSPVPEAAAWPMCAQKIVNHVDESLHAKATPQVTQALNVLTTTFGRCHNPWTGVLWERLSPPVARLFERDPIPAVHALMDLLLSVARSPVLNFAACGLWEMLAQTLSRLSPIQAGPLALGTLKLQHCPQELRTQAFGVLLQPLACILKATTQAPGPPGLLDGTVGSLLTVDILLASKSACVGLLCQTLAHLEELQMLPQCPSPWPQVHLLQAALTILHLCDGSADPSSSAGGRLCGTLGGCVRVQRAALDFLGTLSQGTSPLELVLEVFAVLLKTLESPESSPMVLKKAFQATLRWLQNPHKTPSSSDLSSDALLFLGELFPILQKRLCSPCWEVRDSALEFLTHLIRHWGGQADFREALRSSEVPTLALQLLQDPESYVRASAVGAAGQLSSQGLQAAPASPENSQAQQGLLMDLMHILSTDSEGFPRRAVLRVFTDWLRDGHADVVRDTEWFVATVLQAVSRDLDWEVRVQGLELARVFLTQALGQPSLHCPYTVGLPRASSPRPHPEFLQTLCRLPLFEFAFCALLDCDRPVAQKACDLLLFLRDKTVPCSSPREAGDSPNSASVEAALQRWREGEQAQPLGDLDPEAMLAILRALDLEGLQGRLAKSSDHVEKSPQSLLQDMLATVGVLEENEADCY.

A required for interaction with NDFIP1 region spans residues 100-200; the sequence is LGLFGESGAP…WPMCAQKIVN (101 aa). HEAT repeat units follow at residues 495–531 and 544–576; these read LLFL…IRHW and SEVP…SSQG. Position 743 is a phosphoserine (Ser-743). The BRAT1-like motif signature appears at 820-822; sequence DCY. Cys-821 contributes to the Zn(2+) binding site.

It belongs to the BRAT1 family. In terms of assembly, part of the multiprotein complex composed of BRAT1, WDR73, as well as integrator complex subunits INTS9 and INTS11. Interacts with BRCA1 and ATM. Interacts with MTOR and RPTOR. Interacts with NDFIP1. Interacts with SMC1A and PRKDC. Ubiquitinated by NEDD4, NEDD4L and ITCH; mono- and polyubiquitinated forms are detected. In terms of tissue distribution, high levels detected in the cortex and much lower levels detected in the cerebellum, spinal cord and lung (at protein level).

It localises to the nucleus. The protein resides in the cytoplasm. In terms of biological role, component of a multiprotein complex required for the assembly of the RNA endonuclease module of the integrator complex. Associates with INTS9 and INTS11 in the cytoplasm and blocks the active site of INTS11 to inhibit the endonuclease activity of INTS11 before formation of the full integrator complex. Following dissociation of WDR73 of the complex, BRAT1 facilitates the nuclear import of the INTS9-INTS11 heterodimer. In the nucleus, INTS4 is integrated to the INTS9-INTS11 heterodimer and BRAT1 is released from the mature RNA endonuclease module by inositol hexakisphosphate (InsP6). BRAT1 is also involved in DNA damage response; activates kinases ATM, SMC1A and PRKDC by modulating their phosphorylation status following ionizing radiation (IR) stress. Plays a role in regulating mitochondrial function and cell proliferation. Required for protein stability of MTOR and MTOR-related proteins, and cell cycle progress by growth factors. The chain is Integrator complex assembly factor BRAT1 from Mus musculus (Mouse).